A 492-amino-acid polypeptide reads, in one-letter code: Cysteine--tRNA ligase (492 aa).

A Zn(2+)-binding site is contributed by Cys29. Residues 31–41 carry the 'HIGH' region motif; sequence PTVYDYAHIGN. 3 residues coordinate Zn(2+): Cys222, His247, and Glu251. Residues 279–283 carry the 'KMSKS' region motif; the sequence is KMSKS. Lys282 is an ATP binding site.

The protein belongs to the class-I aminoacyl-tRNA synthetase family. In terms of assembly, monomer. Requires Zn(2+) as cofactor.

It is found in the cytoplasm. It carries out the reaction tRNA(Cys) + L-cysteine + ATP = L-cysteinyl-tRNA(Cys) + AMP + diphosphate. In Treponema denticola (strain ATCC 35405 / DSM 14222 / CIP 103919 / JCM 8153 / KCTC 15104), this protein is Cysteine--tRNA ligase.